A 976-amino-acid polypeptide reads, in one-letter code: Ubiquitin ligase-binding protein BUL1 (976 aa).

The segment at 1–65 (MAKDLNDSGF…SPSLHSPKSW (65 aa)) is disordered. Residues 23–39 (SDFTANSSTTMNVNANT) show a composition bias toward polar residues. The span at 53–64 (SSRSPSLHSPKS) shows a compositional bias: low complexity. Phosphoserine occurs at positions 58 and 70. Disordered regions lie at residues 82–124 (LAHS…DGDI), 145–196 (PQGN…SSST), and 857–878 (SEDSISHTGNGSSSSPSSASLT). Residues 156 to 160 (FPPSY) carry the PY-motif motif. Over residues 163–176 (ANNSTATGAAGSSA) the composition is skewed to low complexity. Polar residues predominate over residues 177 to 196 (DLSHQSLSTDALGATRSSST). Low complexity predominate over residues 862–878 (SHTGNGSSSSPSSASLT).

This sequence belongs to the BUL1 family. Component of the RSP5-BUL1/2 ubiquitin ligase complex composed of at least RSP5 and BUL1 or BUL2.

The protein resides in the cytoplasm. It participates in protein modification; protein ubiquitination. Functionally, component of a RSP5 ubiquitin ligase complex which specifies polyubiquitination and intracellular trafficking of the general amino acid permease GAP1 as well as other permeases such as PMA1. The RSP5-BUL1/2 complex is also necessary for the heat-shock element (HSE)-mediated gene expression, nitrogen starvation GLN3-dependent transcription and pressure-induced differential regulation of the 2 tryptophan permeases TAT1 and TAT2. This is Ubiquitin ligase-binding protein BUL1 (BUL1) from Saccharomyces cerevisiae (strain ATCC 204508 / S288c) (Baker's yeast).